A 218-amino-acid chain; its full sequence is Riboflavin kinase (218 aa).

Residues 1-27 (MRPDGPRDPVAGPDSGPEPPYPVRLSG) form a disordered region. 2 residues coordinate Mg(2+): Thr-44 and Asn-46. The Nucleophile role is filled by Glu-120.

It belongs to the flavokinase family. It depends on Zn(2+) as a cofactor. Mg(2+) is required as a cofactor.

It catalyses the reaction riboflavin + ATP = FMN + ADP + H(+). It participates in cofactor biosynthesis; FMN biosynthesis; FMN from riboflavin (ATP route): step 1/1. In terms of biological role, catalyzes the phosphorylation of riboflavin (vitamin B2) to form flavin mononucleotide (FMN) coenzyme. The sequence is that of Riboflavin kinase (fmn1) from Neosartorya fischeri (strain ATCC 1020 / DSM 3700 / CBS 544.65 / FGSC A1164 / JCM 1740 / NRRL 181 / WB 181) (Aspergillus fischerianus).